The sequence spans 565 residues: NAD-dependent malic enzyme (565 aa).

Tyr-104 (proton donor) is an active-site residue. Position 157 (Arg-157) interacts with NAD(+). Lys-175 acts as the Proton acceptor in catalysis. A divalent metal cation-binding residues include Glu-246, Asp-247, and Asp-270. NAD(+)-binding residues include Asp-270 and Asn-418.

Belongs to the malic enzymes family. As to quaternary structure, homotetramer. Mg(2+) serves as cofactor. Requires Mn(2+) as cofactor.

The catalysed reaction is (S)-malate + NAD(+) = pyruvate + CO2 + NADH. The enzyme catalyses oxaloacetate + H(+) = pyruvate + CO2. The sequence is that of NAD-dependent malic enzyme from Salmonella arizonae (strain ATCC BAA-731 / CDC346-86 / RSK2980).